The primary structure comprises 441 residues: Ribosomal protein uS12 methylthiotransferase RimO (441 aa).

The region spanning 8-118 (PKIGFVSLGC…VLQHVHHYVP (111 aa)) is the MTTase N-terminal domain. C17, C53, C82, C150, C154, and C157 together coordinate [4Fe-4S] cluster. One can recognise a Radical SAM core domain in the interval 136–373 (LTPRHYAYLK…MQLQQQISAE (238 aa)). One can recognise a TRAM domain in the interval 376–441 (QEKVGREILV…DEYDLWGSRV (66 aa)).

Belongs to the methylthiotransferase family. RimO subfamily. Requires [4Fe-4S] cluster as cofactor.

The protein localises to the cytoplasm. It catalyses the reaction L-aspartate(89)-[ribosomal protein uS12]-hydrogen + (sulfur carrier)-SH + AH2 + 2 S-adenosyl-L-methionine = 3-methylsulfanyl-L-aspartate(89)-[ribosomal protein uS12]-hydrogen + (sulfur carrier)-H + 5'-deoxyadenosine + L-methionine + A + S-adenosyl-L-homocysteine + 2 H(+). Catalyzes the methylthiolation of an aspartic acid residue of ribosomal protein uS12. The sequence is that of Ribosomal protein uS12 methylthiotransferase RimO from Salmonella paratyphi B (strain ATCC BAA-1250 / SPB7).